A 54-amino-acid chain; its full sequence is ISINQDLKAITDMLLTEQIQARRRCLAALRQRLLDLDSDVSLFNGDLLPNGRCS.

The cysteines at positions 25 and 53 are disulfide-linked. Leu36 carries the leucine amide modification.

The protein belongs to the molluscan ELH family. This protein consists of a large 36-residue subunit, bound by a single disulfide-bond to a small 18-residue subunit.

The protein resides in the secreted. In terms of biological role, injected in sexually mature animals califin C excites LB and LC cells of the abdominal ganglion and cause egg-laying. The sequence is that of Califin-C from Aplysia californica (California sea hare).